Reading from the N-terminus, the 316-residue chain is 4-diphosphocytidyl-2-C-methyl-D-erythritol kinase (316 aa).

Residue Lys-23 is part of the active site. Residue 108-118 (PVAGGMAGGSA) coordinates ATP. The active site involves Asp-150.

Belongs to the GHMP kinase family. IspE subfamily.

It catalyses the reaction 4-CDP-2-C-methyl-D-erythritol + ATP = 4-CDP-2-C-methyl-D-erythritol 2-phosphate + ADP + H(+). It participates in isoprenoid biosynthesis; isopentenyl diphosphate biosynthesis via DXP pathway; isopentenyl diphosphate from 1-deoxy-D-xylulose 5-phosphate: step 3/6. Functionally, catalyzes the phosphorylation of the position 2 hydroxy group of 4-diphosphocytidyl-2C-methyl-D-erythritol. This chain is 4-diphosphocytidyl-2-C-methyl-D-erythritol kinase, found in Mycolicibacterium paratuberculosis (strain ATCC BAA-968 / K-10) (Mycobacterium paratuberculosis).